A 213-amino-acid polypeptide reads, in one-letter code: uncharacterized protein (213 aa).

Residues glycine 53, glutamate 74, and aspartate 96 each contribute to the S-adenosyl-L-methionine site.

The protein belongs to the methyltransferase superfamily. YrrT family.

In terms of biological role, could be a S-adenosyl-L-methionine-dependent methyltransferase. This is an uncharacterized protein from Oceanobacillus iheyensis (strain DSM 14371 / CIP 107618 / JCM 11309 / KCTC 3954 / HTE831).